A 469-amino-acid chain; its full sequence is Glutamate--tRNA ligase 2 (469 aa).

The 'HIGH' region motif lies at 10 to 20 (PSPTGYLHIGG). Zn(2+)-binding residues include cysteine 99, cysteine 101, cysteine 126, and aspartate 128. The 'KMSKS' region motif lies at 237–241 (RLSKR). Lysine 240 contacts ATP.

The protein belongs to the class-I aminoacyl-tRNA synthetase family. Glutamate--tRNA ligase type 1 subfamily. Monomer. Zn(2+) serves as cofactor.

The protein localises to the cytoplasm. The enzyme catalyses tRNA(Glu) + L-glutamate + ATP = L-glutamyl-tRNA(Glu) + AMP + diphosphate. In terms of biological role, catalyzes the attachment of glutamate to tRNA(Glu) in a two-step reaction: glutamate is first activated by ATP to form Glu-AMP and then transferred to the acceptor end of tRNA(Glu). The protein is Glutamate--tRNA ligase 2 of Coxiella burnetii (strain CbuG_Q212) (Coxiella burnetii (strain Q212)).